We begin with the raw amino-acid sequence, 130 residues long: Sec-independent protein translocase protein TatB (130 aa).

A helical membrane pass occupies residues 1-21; sequence MFDISFTELIVIGIVALVVIG. The interval 70–130 is disordered; the sequence is VDSFQNSVHS…TPKEPRQSGS (61 aa). Basic and acidic residues-rich tracts occupy residues 80-89 and 96-111; these read EINKIQETAD and PEKE…KTEP.

It belongs to the TatB family. As to quaternary structure, the Tat system comprises two distinct complexes: a TatABC complex, containing multiple copies of TatA, TatB and TatC subunits, and a separate TatA complex, containing only TatA subunits. Substrates initially bind to the TatABC complex, which probably triggers association of the separate TatA complex to form the active translocon.

It is found in the cell inner membrane. In terms of biological role, part of the twin-arginine translocation (Tat) system that transports large folded proteins containing a characteristic twin-arginine motif in their signal peptide across membranes. Together with TatC, TatB is part of a receptor directly interacting with Tat signal peptides. TatB may form an oligomeric binding site that transiently accommodates folded Tat precursor proteins before their translocation. In Nitrosomonas eutropha (strain DSM 101675 / C91 / Nm57), this protein is Sec-independent protein translocase protein TatB.